We begin with the raw amino-acid sequence, 432 residues long: MSELKDCPLQFHDFKSVDHLKVCPRYTAVLARSEDDGIGIEELDTLQLELETLLSSASRRLRVLEAETQILTDWQDKKGDRRFLKLGRDHELGAPPKHGKPKKQKLEGKTGHGPGPGPGRPKSKNVQPKIQEYEFTDDPIDVPRIPKNDAPNRFWASVEPYCADITSEEVRTLEELLKPPEDEAEHYKIPPLGKHYSQRWAQEDLLEEQKDGARAAAVADKKKGLIGPLTELDTKDVDALLKKSEAQHEQPEDGCPFGALTQRLLQALVEENIISPMEDSPIPDMSGKESGADGASTSPRNQNKPFSVPHTKSLESRIKEELIAQGLLESEDRPAEDSEDEVLAELRKRQAELKALSAHNRTKKHDLLRLAKEEVSRQELRQRVRMADNEVMDAFRKIMAARQKKRTPTKKEKDQAWKTLKERESILKLLDG.

A Glycyl lysine isopeptide (Lys-Gly) (interchain with G-Cter in SUMO2) cross-link involves residue Lys-21. Residues 40–69 (IEELDTLQLELETLLSSASRRLRVLEAETQ) adopt a coiled-coil conformation. The interval 87–127 (GRDHELGAPPKHGKPKKQKLEGKTGHGPGPGPGRPKSKNVQ) is disordered. Residue Lys-129 forms a Glycyl lysine isopeptide (Lys-Gly) (interchain with G-Cter in SUMO2) linkage. The disordered stretch occupies residues 272 to 319 (NIISPMEDSPIPDMSGKESGADGASTSPRNQNKPFSVPHTKSLESRIK). Phosphoserine is present on residues Ser-280 and Ser-298. Residues 295-305 (ASTSPRNQNKP) are compositionally biased toward polar residues. The stretch at 367-407 (LLRLAKEEVSRQELRQRVRMADNEVMDAFRKIMAARQKKRT) forms a coiled coil. An N6-acetyllysine modification is found at Lys-418.

Belongs to the NGG1 family. The PCAF complex is composed of a number of TBP-associated factors (TAFS), such as TAF5, TAF5L, TAF6, TAF6L, TAF9, TAF10 and TAF12, PCAF, and also PCAF-associated factors (PAFs), such as TADA2L/ADA2, TADA3L/ADA3 and SPT3. Interacts directly with TADA2L and PCAF and also with the high-risk HPV oncoprotein E6. Component of the STAGA transcription coactivator-HAT complex, at least composed of SUPT3H, GCN5L2, TAF5L, TAF6L, SUPT7L, TADA3L, TAD1L, TAF10, TAF12, TRRAP and TAF9. Component of the TFTC-HAT complex. Component of the ADA2A-containing complex (ATAC), composed of KAT14, KAT2A, TADA2L, TADA3L, ZZ3, MBIP, WDR5, YEATS2, CCDC101 and DR1.

Its subcellular location is the nucleus. Functions as a component of the PCAF complex. The PCAF complex is capable of efficiently acetylating histones in a nucleosomal context. The PCAF complex could be considered as the human version of the yeast SAGA complex. Also known as a coactivator for p53/TP53-dependent transcriptional activation. Component of the ATAC complex, a complex with histone acetyltransferase activity on histones H3 and H4. This is Transcriptional adapter 3 (Tada3) from Mus musculus (Mouse).